A 170-amino-acid polypeptide reads, in one-letter code: uncharacterized protein (170 aa).

5 helical membrane passes run 21–41 (NISL…AAVL), 55–75 (AYTS…TLLL), 86–106 (TGIA…YWLW), 117–137 (ISGV…VSLL), and 143–163 (FSAA…TLLP). Positions 35 to 161 (IIFAAVLRWT…IMLATLGSTL (127 aa)) constitute an EamA domain.

It belongs to the EamA transporter family.

It is found in the cell membrane. This is an uncharacterized protein from Haemophilus influenzae (strain ATCC 51907 / DSM 11121 / KW20 / Rd).